The chain runs to 348 residues: MTALFQSWGLPYDWAWFVSTIIGILVIALPLMLAVAMIIYADRKIWAAMALRRGPNVVGPWGLLQSFADGAKVFLQETIIPAAANKGLFLLAPIITFTVALIVWAVIPFAPGVVLADINIGLLYVLAASSIGVYGVIIAGWASNSKYPFYSALRAAAQMVSYEVSIGFVLISVVLWTGSFNMSAIVEGQRAHIFGFINGYGFNPLLFPMAVVFLISAMAETARTPFDLTEAESELVAGYQTEYSSMSFALYWLGEYANVILMCGLNAILFWGGWLPPVDWAPLYMVPGIIWFFAKLLFFFFVFSWVKATVPRYRYDQLMRLGWKVFLPLSLFWVFLVSGWLMLTRYGV.

A run of 8 helical transmembrane segments spans residues 21 to 41, 87 to 107, 120 to 140, 166 to 186, 193 to 213, 258 to 278, 283 to 303, and 323 to 343; these read IIGI…IIYA, GLFL…WAVI, IGLL…IIAG, IGFV…SAIV, IFGF…AVVF, NVIL…LPPV, LYMV…FFVF, and WKVF…WLML.

Belongs to the complex I subunit 1 family. NDH-1 is composed of 14 different subunits. Subunits NuoA, H, J, K, L, M, N constitute the membrane sector of the complex.

The protein localises to the cell inner membrane. It catalyses the reaction a quinone + NADH + 5 H(+)(in) = a quinol + NAD(+) + 4 H(+)(out). Its function is as follows. NDH-1 shuttles electrons from NADH, via FMN and iron-sulfur (Fe-S) centers, to quinones in the respiratory chain. The immediate electron acceptor for the enzyme in this species is believed to be ubiquinone. Couples the redox reaction to proton translocation (for every two electrons transferred, four hydrogen ions are translocated across the cytoplasmic membrane), and thus conserves the redox energy in a proton gradient. This subunit may bind ubiquinone. The chain is NADH-quinone oxidoreductase subunit H from Rhizorhabdus wittichii (strain DSM 6014 / CCUG 31198 / JCM 15750 / NBRC 105917 / EY 4224 / RW1) (Sphingomonas wittichii).